The primary structure comprises 285 residues: Putative lipoprotein SCO4650 (285 aa).

The first 20 residues, 1–20 (MTGTTARRTVVSVAVSAALA), serve as a signal peptide directing secretion. C21 carries N-palmitoyl cysteine lipidation. Residue C21 is the site of S-diacylglycerol cysteine attachment. The tract at residues 27–63 (GPGGSDDAGHSTGPTGSARPSASAPASSRAPALTGPS) is disordered. Positions 43 to 58 (SARPSASAPASSRAPA) are enriched in low complexity.

The protein localises to the cell membrane. The polypeptide is Putative lipoprotein SCO4650 (Streptomyces coelicolor (strain ATCC BAA-471 / A3(2) / M145)).